Reading from the N-terminus, the 85-residue chain is Putative defensin-like protein 79 (85 aa).

The N-terminal stretch at 1-31 (MKSEKSADAYGTYFLLISTIFLLFIARQASS) is a signal peptide. Cystine bridges form between Cys-37/Cys-69, Cys-44/Cys-60, Cys-47/Cys-67, and Cys-51/Cys-68.

The protein belongs to the DEFL family.

It is found in the secreted. The chain is Putative defensin-like protein 79 from Arabidopsis thaliana (Mouse-ear cress).